The following is a 232-amino-acid chain: Enolase-phosphatase E1 (232 aa).

Belongs to the HAD-like hydrolase superfamily. MasA/MtnC family. In terms of assembly, monomer. Mg(2+) is required as a cofactor.

It catalyses the reaction 5-methylsulfanyl-2,3-dioxopentyl phosphate + H2O = 1,2-dihydroxy-5-(methylsulfanyl)pent-1-en-3-one + phosphate. It functions in the pathway amino-acid biosynthesis; L-methionine biosynthesis via salvage pathway; L-methionine from S-methyl-5-thio-alpha-D-ribose 1-phosphate: step 3/6. It participates in amino-acid biosynthesis; L-methionine biosynthesis via salvage pathway; L-methionine from S-methyl-5-thio-alpha-D-ribose 1-phosphate: step 4/6. Its function is as follows. Bifunctional enzyme that catalyzes the enolization of 2,3-diketo-5-methylthiopentyl-1-phosphate (DK-MTP-1-P) into the intermediate 2-hydroxy-3-keto-5-methylthiopentenyl-1-phosphate (HK-MTPenyl-1-P), which is then dephosphorylated to form the acireductone 1,2-dihydroxy-3-keto-5-methylthiopentene (DHK-MTPene). The polypeptide is Enolase-phosphatase E1 (Xylella fastidiosa (strain M12)).